Consider the following 176-residue polypeptide: Ferredoxin-type protein NapF (176 aa).

4Fe-4S ferredoxin-type domains lie at 39–68 (VENS…KGDA) and 71–100 (PEVR…PRDQ). Residues cysteine 48, cysteine 51, cysteine 54, cysteine 58, cysteine 80, cysteine 83, cysteine 86, cysteine 90, cysteine 113, cysteine 121, cysteine 124, cysteine 128, cysteine 152, cysteine 155, cysteine 158, and cysteine 162 each contribute to the [4Fe-4S] cluster site. 4Fe-4S ferredoxin-type domains lie at 119–138 (IECR…FKLQ) and 143–172 (AQPL…MNDL).

This sequence belongs to the NapF family. As to quaternary structure, interacts with the cytoplasmic NapA precursor. It depends on [4Fe-4S] cluster as a cofactor.

Its subcellular location is the cytoplasm. Functionally, could be involved in the maturation of NapA, the catalytic subunit of the periplasmic nitrate reductase, before its export into the periplasm. The chain is Ferredoxin-type protein NapF from Haemophilus influenzae (strain ATCC 51907 / DSM 11121 / KW20 / Rd).